The primary structure comprises 368 residues: Probable endopolygalacturonase I (368 aa).

The signal sequence occupies residues 1–18 (MHSYQLLGLAAVGSLVSA). A propeptide spanning residues 19 to 31 (APAPSRVSEFAKK) is cleaved from the precursor. C35 and C50 are disulfide-bonded. PbH1 repeat units lie at residues 140 to 161 (VEDSTFKGINIKNTPVQAISVQ), 162 to 192 (ATNVHLNDFTIDNSDGDDNGGHNTDGFDISE), and 193 to 214 (STGVYISGATVKNQDDCIAINS). The Proton donor role is filled by D207. Cysteines 209 and 225 form a disulfide. H229 is an active-site residue. 3 PbH1 repeats span residues 244–265 (VKNVTISDSTVSNSANGVRIKT), 273–295 (VSEITYSNIQLSGITDYGIVIEQ), and 307–352 (STGI…DLSG). N246 carries N-linked (GlcNAc...) asparagine glycosylation. 2 disulfide bridges follow: C335/C340 and C359/C368.

This sequence belongs to the glycosyl hydrolase 28 family.

It localises to the secreted. The catalysed reaction is (1,4-alpha-D-galacturonosyl)n+m + H2O = (1,4-alpha-D-galacturonosyl)n + (1,4-alpha-D-galacturonosyl)m.. Functionally, involved in maceration and soft-rotting of plant tissue. Hydrolyzes the 1,4-alpha glycosidic bonds of de-esterified pectate in the smooth region of the plant cell wall. The sequence is that of Probable endopolygalacturonase I (pgaI) from Aspergillus niger (strain ATCC MYA-4892 / CBS 513.88 / FGSC A1513).